Consider the following 380-residue polypeptide: Flap endonuclease 1 (380 aa).

Residues M1–R104 form an N-domain region. Symmetric dimethylarginine; by PRMT5 is present on R19. D34 contributes to the Mg(2+) binding site. DNA is bound by residues R47 and R70. K80 bears the N6-acetyllysine mark. A Mg(2+)-binding site is contributed by D86. Residues R100 and R104 each carry the symmetric dimethylarginine; by PRMT5 modification. The interval E122–H253 is I-domain. Residues E158, E160, D179, and D181 each contribute to the Mg(2+) site. Residue E158 participates in DNA binding. Position 187 is a phosphoserine; by CDK2 (S187). A Symmetric dimethylarginine; by PRMT5 modification is found at R192. S197 carries the phosphoserine modification. The DNA site is built by G231 and D233. Mg(2+) is bound at residue D233. Residues S255, S293, and S335 each carry the phosphoserine modification. Residues R327–K380 are disordered. T336 carries the post-translational modification Phosphothreonine. The interval T336–F344 is interaction with PCNA. At K354 the chain carries N6-acetyllysine. Residues S363–K380 are compositionally biased toward basic residues. T364 bears the Phosphothreonine mark. N6-acetyllysine occurs at positions 375, 377, and 380.

It belongs to the XPG/RAD2 endonuclease family. FEN1 subfamily. Interacts with PCNA. Three molecules of FEN1 bind to one PCNA trimer with each molecule binding to one PCNA monomer. PCNA stimulates the nuclease activity without altering cleavage specificity. The C-terminal domain binds EP300; can bind simultaneously to both PCNA and EP300. Interacts with DDX11; this interaction is direct and increases flap endonuclease activity of FEN1. Interacts with WDR4; regulating its endonuclease activity. Interacts with POLB. The cofactor is Mg(2+). Post-translationally, acetylated by EP300. Acetylation inhibits both endonuclease and exonuclease activity. Acetylation also reduces DNA-binding activity but does not affect interaction with PCNA or EP300. Phosphorylation upon DNA damage induces relocalization to the nuclear plasma. Phosphorylation at Ser-187 by CDK2 occurs during late S-phase and results in dissociation from PCNA. In terms of processing, methylation at Arg-192 by PRMT5 impedes Ser-187 phosphorylation and increases interaction with PCNA.

It is found in the nucleus. The protein resides in the nucleolus. It localises to the nucleoplasm. Its subcellular location is the mitochondrion. In terms of biological role, structure-specific nuclease with 5'-flap endonuclease and 5'-3' exonuclease activities involved in DNA replication and repair. During DNA replication, cleaves the 5'-overhanging flap structure that is generated by displacement synthesis when DNA polymerase encounters the 5'-end of a downstream Okazaki fragment. It enters the flap from the 5'-end and then tracks to cleave the flap base, leaving a nick for ligation. Also involved in the long patch base excision repair (LP-BER) pathway, by cleaving within the apurinic/apyrimidinic (AP) site-terminated flap. Acts as a genome stabilization factor that prevents flaps from equilibrating into structures that lead to duplications and deletions. Also possesses 5'-3' exonuclease activity on nicked or gapped double-stranded DNA, and exhibits RNase H activity. Also involved in replication and repair of rDNA and in repairing mitochondrial DNA. This is Flap endonuclease 1 from Homo sapiens (Human).